A 1131-amino-acid polypeptide reads, in one-letter code: Plasma membrane ATPase (1131 aa).

Transmembrane regions (helical) follow at residues 77 to 97 (PVLV…EAAA), 98 to 118 (IISI…LLLI), 151 to 171 (GAIV…LIRL), 231 to 251 (AVVY…LISG), 265 to 285 (MSAI…AVQF), and 305 to 325 (MLVV…SVTL). D357 functions as the 4-aspartylphosphate intermediate in the catalytic mechanism. Mg(2+) contacts are provided by D615 and D619. 5 helical membrane-spanning segments follow: residues 642–662 (AADI…VIGA), 689–709 (LITV…MAVF), 733–753 (ITNI…STWA), 884–904 (LAFF…LGGF), and 946–966 (VIGC…WYVL). Residues 994 to 1010 (KRSLDRRSKDDIGDKEF) are compositionally biased toward basic and acidic residues. 2 disordered regions span residues 994–1023 (KRSL…NYSN) and 1067–1131 (RRSM…TIRE). Positions 1089-1100 (SRTSNTLSTGSK) are enriched in polar residues. Residues 1118–1131 (IKPDKYDFASTIRE) are compositionally biased toward basic and acidic residues.

The protein belongs to the cation transport ATPase (P-type) (TC 3.A.3) family. Type IIIA subfamily.

It is found in the cell membrane. It carries out the reaction ATP + H2O + H(+)(in) = ADP + phosphate + 2 H(+)(out). Functionally, the plasma membrane ATPase of plants and fungi is a hydrogen ion pump. The proton gradient it generates drives the active transport of nutrients by H(+)-symport. The resulting external acidification and/or internal alkinization may mediate growth responses. The chain is Plasma membrane ATPase (PMA1) from Dunaliella bioculata (Green alga).